Reading from the N-terminus, the 751-residue chain is Meiotic sister-chromatid recombination protein 3 (751 aa).

Disordered regions lie at residues 54–88 (GVGM…RTYS), 216–290 (LRAP…KKQM), 314–410 (PALE…EARF), 431–504 (TQEN…RPSF), and 558–610 (KDVP…SPPQ). The segment covering 216–228 (LRAPPRVQQQRQL) has biased composition (low complexity). Composition is skewed to basic and acidic residues over residues 345-356 (ERSRPAKREVRK) and 384-393 (ERVHNKEKTL). A compositionally biased stretch (polar residues) spans 431 to 496 (TQENSTRDNG…GCETGNTTPK (66 aa)). A compositionally biased stretch (low complexity) spans 596–609 (RSSISSSPRRSSPP).

It is found in the cell membrane. In terms of biological role, may be involved in the control of meiotic sister-chromatid recombination. This Eremothecium gossypii (strain ATCC 10895 / CBS 109.51 / FGSC 9923 / NRRL Y-1056) (Yeast) protein is Meiotic sister-chromatid recombination protein 3 (MSC3).